A 51-amino-acid polypeptide reads, in one-letter code: Ovomucoid (51 aa).

The 49-residue stretch at 3–51 folds into the Kazal-like domain; it reads VDCSGYPKPDCTLESFPLCGSDNQTYSNKCAFCNAAVERNVTLRHLGEC. Disulfide bonds link Cys-5-Cys-35, Cys-13-Cys-32, and Cys-21-Cys-51. Asn-42 carries N-linked (GlcNAc...) asparagine glycosylation.

The protein resides in the secreted. The protein is Ovomucoid of Rhynchotus rufescens (Red-winged tinamou).